The following is a 491-amino-acid chain: MRPAPLDIGNIHFVGIGGIGMSGIAEVMHNLGYTVQGSDLADSANVKRLKGLGIKVFIGQKAENLAEAQVIVVSSAIRADNPELMEARARFLPVVRRAEMLAELMRLKSCVAIGGTHGKTTTTSLVAAILDKAGLDPTVINGGIINAYGTNARLGGGEWMVVEADESDGTFVKLPATIAIVTNIDPEHLDYYGSFDAAKDAFLAFVENVPFYGAAVMCIDHPEVQALIGRVRDRRIVTYGTNPQADIRATNARVEDGFNVFDVAITDRKTGTAREMTGVRLAMHGTHNMLNSLAAIGVATQMGIADDKIRAALEGFGGVKRRFTFVGSWNDVNIYDDYGHHPVEIAAVLQAARSATKGRTIAVVQPHRYTRLHNLFDEFCACFNDADAVIVADVYEAGEKPIEGASRDALVEGLRDRGHRNVMALDGPEALPRLIAETARPGDLVVCLGAGSITYWANALPDDLAKLGGKKKAAAKSAAKTKAKPKKGRGK.

115 to 121 (GTHGKTT) is a binding site for ATP.

The protein belongs to the MurCDEF family.

Its subcellular location is the cytoplasm. It carries out the reaction UDP-N-acetyl-alpha-D-muramate + L-alanine + ATP = UDP-N-acetyl-alpha-D-muramoyl-L-alanine + ADP + phosphate + H(+). It participates in cell wall biogenesis; peptidoglycan biosynthesis. Cell wall formation. In Parvibaculum lavamentivorans (strain DS-1 / DSM 13023 / NCIMB 13966), this protein is UDP-N-acetylmuramate--L-alanine ligase.